A 453-amino-acid chain; its full sequence is Lysine histidine transporter-like 1 (453 aa).

The Cytoplasmic portion of the chain corresponds to 1–44 (MYIQMTDGVPPPPEQSSLDHRIDELERQKEIDDWLPITSSRNAK). 2 consecutive transmembrane segments (helical) span residues 45 to 65 (WWYS…LGLP) and 66 to 86 (FFMA…SWII). The Cytoplasmic portion of the chain corresponds to 87–122 (TLYTLWQMVEMHEMVPGKRFDRYHELGQFAFGERLG). Residues 123–143 (LYIIVPQQIIVEVGVCIVYMV) traverse the membrane as a helical segment. Over 144–164 (TGGQSLKKFHEIACQDCSPIR) the chain is Extracellular. A helical transmembrane segment spans residues 165–185 (LSFFIMIFASSHFVLSHLPNF). Topologically, residues 186–187 (NS) are cytoplasmic. Residues 188–208 (ISGVSLVAAVMSLSYSTIAWT) traverse the membrane as a helical segment. Over 209 to 231 (ATAAKGVQEDVQYGYKSGTTAST) the chain is Extracellular. A helical transmembrane segment spans residues 232–252 (VLSFFTGLGGIAFAYAGHNVV). The Cytoplasmic segment spans residues 253–276 (LEIQATIPSTPSNPSKGPMWRGVV). The chain crosses the membrane as a helical span at residues 277–297 (VAYVVVALCYFPVALVGYGVF). Topologically, residues 298–318 (GNAVLDNVLMSLETPVWAIAT) are extracellular. The chain crosses the membrane as a helical span at residues 319-339 (ANLFVVMHVIGSYQIFAMPVF). Over 340-359 (DMVETFLVKKLNFKPSTVLR) the chain is Cytoplasmic. Residues 360-382 (FIVRNVYVALTMFIGIMIPFFGG) form a helical membrane-spanning segment. The Extracellular segment spans residues 383 to 385 (LLA). A helical membrane pass occupies residues 386–408 (FFGGFAFAPTSYFLPCIMWLLIY). The Cytoplasmic segment spans residues 409-412 (KPKR). Residues 413–433 (FSLSWWTNWVCIVLGVVLMIL) traverse the membrane as a helical segment. At 434–453 (SSIGGLRQIIIQSKDYSFFS) the chain is on the extracellular side.

It belongs to the amino acid/polyamine transporter 2 family. Amino acid/auxin permease (AAAP) (TC 2.A.18.2) subfamily.

It is found in the cell membrane. Functionally, amino acid transporter. The sequence is that of Lysine histidine transporter-like 1 from Arabidopsis thaliana (Mouse-ear cress).